The chain runs to 486 residues: Differentially expressed in FDCP 8 homolog (486 aa).

Residues 1–26 (MSSWCSSEDAHNQSSTPSTRSRKSSW) form a disordered region. 2 Phorbol-ester/DAG-type zinc fingers span residues 160–212 (GHEF…KRVC) and 393–459 (IHTV…SLNC).

This sequence belongs to the DEF8 family.

This Caenorhabditis elegans protein is Differentially expressed in FDCP 8 homolog.